Consider the following 504-residue polypeptide: MEEFQRYLQLDRSQQHDFLYPLIFQEYIYALAHDHGLNRSILLKNTGSDNKSSLLIVKRLIIRMYQQNHLIIPVNDSNQNQLFGRNKNLYSQMISEGFAVIVEIPFSLRLIASLAGKEIVKSHNLRSIHSIFPFFENNFSHLNYVLDMLIPHPVHLEILVQTLRYWVKDASSLHLLRFFLYEYRNWNSLITPKKPSSSFSKKNQRLFFFLYNAHVCEYESIFVFLCNQSSYLRSTSSEAFLERIYFYGKIECLVEVFAKVFPVNLWLFKDPNMHYVRYQGKSIMASKGTSLLMNKWKYYLINFWQCHFYLWSHPGRIYINQLSNHSFDFMGYFSSVRLNPSMVRSQMLENSFLIDNAIKKFDTIVPIIPLIGSLAKAKFCNVLGYPISKPVRADLSDSDIIDRFGRICRNFSHYHSGSSKKKSLYRIKYILRLSCARTLARKHKSSVRFFLKRLGSELLEEFFMAEEQVLPLTFPRVSSTFQGLYRGRVWYLDIFCINDLANHE.

Belongs to the intron maturase 2 family. MatK subfamily.

The protein resides in the plastid. It localises to the chloroplast. In terms of biological role, usually encoded in the trnK tRNA gene intron. Probably assists in splicing its own and other chloroplast group II introns. In Aucuba japonica (Japanese laurel), this protein is Maturase K.